The following is a 239-amino-acid chain: RING finger protein 151 (239 aa).

The RING-type zinc-finger motif lies at 20–58; it reads CSVCHGVLKRPTRLPCSHIFCKKCIFRWLARQNTCPCCR. A TRAF-type zinc finger spans residues 101–156; the sequence is EHQDSCPFELMACPNEGCTVQVLRGVLDEHRQHCQQNGQQRCPLGCGSTLAALEGE.

In terms of assembly, interacts with DTNBP1. In terms of tissue distribution, expressed in testis. Expressed in round spermatids of the stages VII-VIII semniniferous tubules. Expressed in elongating spermatids of stages VIII-IX seminiferous tubules (at protein level).

It is found in the cytoplasm. The protein localises to the nucleus. Functionally, may be involved in acrosome formation of spermatids. This is RING finger protein 151 (Rnf151) from Mus musculus (Mouse).